A 460-amino-acid polypeptide reads, in one-letter code: GTPase Der (460 aa).

EngA-type G domains are found at residues 2–164 (QSII…HEEF) and 196–368 (IRVG…ENFT). Residues 8–15 (GKPNVGKS), 55–59 (DSGGL), 116–119 (NKVD), 202–209 (GRVNVGKS), 249–253 (DTAGI), and 313–316 (NKWD) each bind GTP. One can recognise a KH-like domain in the interval 369–453 (QKIQTSKLNT…PLVIASRKKG (85 aa)).

This sequence belongs to the TRAFAC class TrmE-Era-EngA-EngB-Septin-like GTPase superfamily. EngA (Der) GTPase family. In terms of assembly, associates with the 50S ribosomal subunit.

In terms of biological role, GTPase that plays an essential role in the late steps of ribosome biogenesis. The polypeptide is GTPase Der (Campylobacter jejuni subsp. jejuni serotype O:6 (strain 81116 / NCTC 11828)).